The following is a 183-amino-acid chain: Small acidic protein (183 aa).

A disordered region spans residues 1–183 (MSAARESHPH…KMMFVKSSGS (183 aa)). Lys-13 is covalently cross-linked (Glycyl lysine isopeptide (Lys-Gly) (interchain with G-Cter in SUMO2)). A phosphoserine mark is found at Ser-15 and Ser-17. A compositionally biased stretch (basic and acidic residues) spans 48–78 (GKKEHTGRLVIGDHKSTSHFRTGEEDKKINE). Lys-62 is covalently cross-linked (Glycyl lysine isopeptide (Lys-Gly) (interchain with G-Cter in SUMO2)). Ser-63 is modified (phosphoserine). Residue Lys-75 forms a Glycyl lysine isopeptide (Lys-Gly) (interchain with G-Cter in SUMO2) linkage. Phosphoserine occurs at positions 87, 127, and 147. Acidic residues predominate over residues 106–149 (EVEDHDGEGDVAGDDDDNDDDSPDPESPDDSESDSESEKEESAE). The span at 153–171 (AAEHPDEVEDPKNKKDAKS) shows a compositional bias: basic and acidic residues. Residues Lys-174 and Lys-179 each carry the N6-acetyllysine modification.

This sequence belongs to the SMAP family.

This chain is Small acidic protein (SMAP), found in Pongo abelii (Sumatran orangutan).